Reading from the N-terminus, the 224-residue chain is Propanediol dehydratase medium subunit (224 aa).

Residues 1–18 (MEINEKLLRQIIEDVLSE) are targets protein to the BMC.

This sequence belongs to the diol/glycerol dehydratase medium subunit family. In terms of assembly, the propanediol dehydratase enzyme is a heterotrimeric complex composed of a large (PduC), a medium (PduD) and a small (PduE) subunit. Requires adenosylcob(III)alamin as cofactor.

It localises to the bacterial microcompartment. The enzyme catalyses propane-1,2-diol = propanal + H2O. It functions in the pathway polyol metabolism; 1,2-propanediol degradation. Its function is as follows. Part of the PduCDE complex that catalyzes the dehydration of 1,2-propanediol (1,2-PD) to propionaldehyde. This subunit is directly targeted to the bacterial microcompartment (BMC). Functionally, expression of a cosmid containing the full 21-gene pdu operon in E.coli allows E.coli to grow on 1,2-propanediol (1,2-PD) with the appearance of BMCs in its cytoplasm. In terms of biological role, the 1,2-PD-specific bacterial microcompartment (BMC) concentrates low levels of 1,2-PD catabolic enzymes, concentrates volatile reaction intermediates thus enhancing pathway flux and keeps the level of toxic, mutagenic propionaldehyde low. This is Propanediol dehydratase medium subunit from Citrobacter freundii.